The chain runs to 427 residues: Homeobox protein knotted-1-like 3 (427 aa).

2 disordered regions span residues glutamine 19 to proline 49 and threonine 272 to glutamine 291. Positions threonine 272–methionine 284 are enriched in polar residues. The region spanning glutamate 330–isoleucine 350 is the ELK domain. The segment at residues leucine 351–asparagine 414 is a DNA-binding region (homeobox; TALE-type).

This sequence belongs to the TALE/KNOX homeobox family. In terms of tissue distribution, maximally expressed in sepals, petals and fully expanded leaves. Also expressed in other flower organs and in developing leaves. Low level expression in stem internodes.

The protein resides in the nucleus. The polypeptide is Homeobox protein knotted-1-like 3 (Malus domestica (Apple)).